We begin with the raw amino-acid sequence, 644 residues long: Acetyl-coenzyme A synthetase (644 aa).

CoA-binding positions include 190 to 193 (RGSK) and Thr308. Residues 384 to 386 (GEP), 408 to 413 (DTWWQT), Asp497, and Arg512 contribute to the ATP site. Ser520 is a CoA binding site. Arg523 is an ATP binding site. Val534, His536, and Val539 together coordinate Mg(2+). CoA is bound at residue Arg581. Lys606 carries the N6-acetyllysine modification.

It belongs to the ATP-dependent AMP-binding enzyme family. Mg(2+) is required as a cofactor. In terms of processing, acetylated. Deacetylation by the SIR2-homolog deacetylase activates the enzyme.

The catalysed reaction is acetate + ATP + CoA = acetyl-CoA + AMP + diphosphate. In terms of biological role, catalyzes the conversion of acetate into acetyl-CoA (AcCoA), an essential intermediate at the junction of anabolic and catabolic pathways. AcsA undergoes a two-step reaction. In the first half reaction, AcsA combines acetate with ATP to form acetyl-adenylate (AcAMP) intermediate. In the second half reaction, it can then transfer the acetyl group from AcAMP to the sulfhydryl group of CoA, forming the product AcCoA. This Magnetococcus marinus (strain ATCC BAA-1437 / JCM 17883 / MC-1) protein is Acetyl-coenzyme A synthetase.